The primary structure comprises 129 residues: Transcription factor bHLH138 (129 aa).

Residues 1 to 18 (MERYTKKNERFKAEEGKG) show a composition bias toward basic and acidic residues. The disordered stretch occupies residues 1–24 (MERYTKKNERFKAEEGKGSKKSRT). The region spanning 19 to 68 (SKKSRTFLTERERRALFNDRFFDLKNLIPNPTKGGEASIVQDGIVYINEL) is the bHLH domain.

Belongs to the bHLH protein family.

The protein resides in the nucleus. This chain is Transcription factor bHLH138, found in Arabidopsis thaliana (Mouse-ear cress).